Here is a 131-residue protein sequence, read N- to C-terminus: Histone H2B.2 (131 aa).

Residues 1–20 (MAPPKAEKKPASKAPAEKKP) are compositionally biased toward basic and acidic residues. Residues 1 to 39 (MAPPKAEKKPASKAPAEKKPAAKKTASSTDAKKRTKTRK) form a disordered region. An N6-acetyllysine; alternate mark is found at lysine 8 and lysine 9. Glycyl lysine isopeptide (Lys-Gly) (interchain with G-Cter in SUMO); alternate cross-links involve residues lysine 8 and lysine 9. Phosphoserine is present on serine 12. N6-acetyllysine is present on lysine 13. N6-acetyllysine; alternate is present on lysine 18. Lysine 18 participates in a covalent cross-link: Glycyl lysine isopeptide (Lys-Gly) (interchain with G-Cter in SUMO); alternate. Lysine 19 participates in a covalent cross-link: Glycyl lysine isopeptide (Lys-Gly) (interchain with G-Cter in SUMO). Residue lysine 125 forms a Glycyl lysine isopeptide (Lys-Gly) (interchain with G-Cter in ubiquitin) linkage.

Belongs to the histone H2B family. As to quaternary structure, the nucleosome is a histone octamer containing two molecules each of H2A, H2B, H3 and H4 assembled in one H3-H4 heterotetramer and two H2A-H2B heterodimers. The octamer wraps approximately 147 bp of DNA. Monoubiquitinated to form H2BK123ub1. H2BK123ub1 gives a specific tag for epigenetic transcriptional activation and is also prerequisite for H3K4me and H3K79me formation. H2BK123ub1 also modulates the formation of double-strand breaks during meiosis and is a prerequisite for DNA-damage checkpoint activation. In terms of processing, phosphorylated by STE20 to form H2BS10ph during progression through meiotic prophase. May be correlated with chromosome condensation. Post-translationally, acetylated by GCN5 to form H2BK11ac and H2BK16ac. H2BK16ac can also be formed by ESA1. Acetylation of N-terminal lysines and particularly formation of H2BK11acK16ac has a positive effect on transcription. Sumoylation to form H2BK6su or H2BK7su, and probably also H2BK16su or H2BK17su, occurs preferentially near the telomeres and represses gene transcription.

The protein localises to the nucleus. Its subcellular location is the chromosome. In terms of biological role, core component of nucleosome. Nucleosomes wrap and compact DNA into chromatin, limiting DNA accessibility to the cellular machineries which require DNA as a template. Histones thereby play a central role in transcription regulation, DNA repair, DNA replication and chromosomal stability. DNA accessibility is regulated via a complex set of post-translational modifications of histones, also called histone code, and nucleosome remodeling. The chain is Histone H2B.2 (HTB2) from Scheffersomyces stipitis (strain ATCC 58785 / CBS 6054 / NBRC 10063 / NRRL Y-11545) (Yeast).